A 220-amino-acid chain; its full sequence is Deoxyribose-phosphate aldolase (220 aa).

Asp-89 acts as the Proton donor/acceptor in catalysis. Lys-151 (schiff-base intermediate with acetaldehyde) is an active-site residue. The Proton donor/acceptor role is filled by Lys-180.

Belongs to the DeoC/FbaB aldolase family. DeoC type 1 subfamily.

Its subcellular location is the cytoplasm. It carries out the reaction 2-deoxy-D-ribose 5-phosphate = D-glyceraldehyde 3-phosphate + acetaldehyde. It participates in carbohydrate degradation; 2-deoxy-D-ribose 1-phosphate degradation; D-glyceraldehyde 3-phosphate and acetaldehyde from 2-deoxy-alpha-D-ribose 1-phosphate: step 2/2. In terms of biological role, catalyzes a reversible aldol reaction between acetaldehyde and D-glyceraldehyde 3-phosphate to generate 2-deoxy-D-ribose 5-phosphate. This chain is Deoxyribose-phosphate aldolase, found in Streptococcus pneumoniae (strain 70585).